We begin with the raw amino-acid sequence, 424 residues long: 3-oxo-tetronate kinase (424 aa).

Residues serine 260, 364–367 (GGET), and glycine 407 each bind ATP.

It belongs to the four-carbon acid sugar kinase family.

The catalysed reaction is 3-dehydro-L-erythronate + ATP = 3-dehydro-4-O-phospho-L-erythronate + ADP + H(+). The enzyme catalyses 3-dehydro-D-erythronate + ATP = 3-dehydro-4-O-phospho-D-erythronate + ADP + H(+). Its function is as follows. Catalyzes the ATP-dependent phosphorylation of 3-oxo-tetronate to 3-oxo-tetronate 4-phosphate. The sequence is that of 3-oxo-tetronate kinase from Pectobacterium atrosepticum (strain SCRI 1043 / ATCC BAA-672) (Erwinia carotovora subsp. atroseptica).